The following is a 189-amino-acid chain: GTPase NRas (189 aa).

GTP contacts are provided by residues 10 to 18 (GAGGVGKSA) and 29 to 30 (VD). The Effector region signature appears at 32–40 (YDPTIEDSY). GTP is bound at residue 57-61 (DTAGQ). The residue at position 89 (S89) is a Phosphoserine. Residue 116–119 (NKCD) participates in GTP binding. The segment at 166–185 (YRMKKLNSSEDGTQGCMGLP) is hypervariable region. K170 participates in a covalent cross-link: Glycyl lysine isopeptide (Lys-Gly) (interchain with G-Cter in ubiquitin). C181 is lipidated: S-palmitoyl cysteine. The S-farnesyl cysteine moiety is linked to residue C186. Residues 187–189 (VVM) constitute a propeptide, removed in mature form.

This sequence belongs to the small GTPase superfamily. Ras family. As to quaternary structure, interacts (active GTP-bound form preferentially) with RGS14. Interacts (active GTP-bound form) with RASSF7. Interacts (active GTP-bound form) with both SHOC2 and PP1c (all isoforms) to form a tertiary complex; SHOC2 and PP1c preferably bind M-Ras/MRAS, but they also bind K-Ras/KRAS, N-Ras/NRAS and H-Ras/HRAS. Palmitoylated by the ZDHHC9-GOLGA7 complex. Depalmitoylated by ABHD17A, ABHD17B and ABHD17C. A continuous cycle of de- and re-palmitoylation regulates rapid exchange between plasma membrane and Golgi. Post-translationally, acetylation at Lys-104 prevents interaction with guanine nucleotide exchange factors (GEFs). In terms of processing, ubiquitinated by the BCR(LZTR1) E3 ubiquitin ligase complex at Lys-170 in a non-degradative manner, leading to inhibit Ras signaling by decreasing Ras association with membranes. Phosphorylation at Ser-89 enhances NRAS association with its downstream effectors.

The protein localises to the cell membrane. Its subcellular location is the golgi apparatus membrane. The catalysed reaction is GTP + H2O = GDP + phosphate + H(+). With respect to regulation, alternates between an inactive form bound to GDP and an active form bound to GTP. Activated by a guanine nucleotide-exchange factor (GEF) and inactivated by a GTPase-activating protein (GAP). In terms of biological role, ras proteins bind GDP/GTP and possess intrinsic GTPase activity. This is GTPase NRas (Nras) from Rattus norvegicus (Rat).